The following is a 303-amino-acid chain: Phenoloxidase-activating factor 2 (303 aa).

The tract at residues 1–24 (PDRRPPEDPITPPPPTKEEQRAGC) is disordered. The region spanning 36–292 (IIGDKDGEAK…LRDWIDDKVA (257 aa)) is the Peptidase S1 domain. 3 disulfide bridges follow: C173-C247, C206-C227, and C237-C268.

It belongs to the peptidase S1 family. In terms of assembly, heterodimer.

The protein resides in the secreted. In terms of biological role, binds and activates processed prophenoloxidases PPO1 and PPO2 and thus is involved in the activation of the prophenoloxidase cascade probably following the recognition of pathogen-derived products. Binds the A.niger cell wall component alpha-1,3-glucan, a fungal pathogen-associated molecular pattern (PAMP) that activates the host immune response. This chain is Phenoloxidase-activating factor 2 (LOC113510063), found in Galleria mellonella (Greater wax moth).